We begin with the raw amino-acid sequence, 241 residues long: Zinc finger CCHC domain-containing protein 17 (241 aa).

An S1 motif domain is found at 16–88 (YTIFQGEVAM…DRIKVSLSMK (73 aa)). Ser114 is modified (phosphoserine). Residues 131-148 (TTCKKCGCKGHFAKDCFM) form a CCHC-type zinc finger. Residue Lys144 is modified to N6-acetyllysine. The disordered stretch occupies residues 160–241 (EEEEEKEEAK…KKKHKKKHKE (82 aa)). The segment covering 166 to 178 (EEAKAEGLEKPDP) has biased composition (basic and acidic residues). Positions 182–198 (SSRKRKKEKKKKKHRDR) are enriched in basic residues. Ser183 carries the post-translational modification Phosphoserine. Residues 211–225 (DTGKKARHSSKDSKA) are compositionally biased toward basic and acidic residues. Positions 226-241 (TKKKKKKKKHKKKHKE) are enriched in basic residues.

Interacts with PNN. Associates with the 60S ribosomal subunit. As to expression, expressed in liver, brain, heart, kidney testis, stomach, small intestine, skin, thymus, uterus, placenta, spleen, lung and skeletal muscle.

Its subcellular location is the nucleus. It localises to the nucleolus. The chain is Zinc finger CCHC domain-containing protein 17 (Zcchc17) from Mus musculus (Mouse).